A 272-amino-acid polypeptide reads, in one-letter code: Acyl-[acyl-carrier-protein]--UDP-N-acetylglucosamine O-acyltransferase (272 aa).

Belongs to the transferase hexapeptide repeat family. LpxA subfamily. As to quaternary structure, homotrimer.

The protein localises to the cytoplasm. It carries out the reaction a (3R)-hydroxyacyl-[ACP] + UDP-N-acetyl-alpha-D-glucosamine = a UDP-3-O-[(3R)-3-hydroxyacyl]-N-acetyl-alpha-D-glucosamine + holo-[ACP]. It participates in glycolipid biosynthesis; lipid IV(A) biosynthesis; lipid IV(A) from (3R)-3-hydroxytetradecanoyl-[acyl-carrier-protein] and UDP-N-acetyl-alpha-D-glucosamine: step 1/6. Functionally, involved in the biosynthesis of lipid A, a phosphorylated glycolipid that anchors the lipopolysaccharide to the outer membrane of the cell. The chain is Acyl-[acyl-carrier-protein]--UDP-N-acetylglucosamine O-acyltransferase from Rhizobium leguminosarum bv. trifolii (strain WSM2304).